The sequence spans 185 residues: Cell wall protein phiA (185 aa).

The N-terminal stretch at 1–18 (MQIKSFVLAASAAATASA) is a signal peptide. N-linked (GlcNAc...) asparagine glycosylation occurs at Asn-60.

The protein belongs to the phiA family.

It is found in the secreted. It localises to the cell wall. Its function is as follows. Cell wall protein involved in development of asexual structures such as phialide and conidium development, and thus required for spore formation. Plays a role as a general stress protectant produced by the fungus in competition with antagonistic bacteria. The protein is Cell wall protein phiA of Aspergillus fumigatus (strain CBS 144.89 / FGSC A1163 / CEA10) (Neosartorya fumigata).